Reading from the N-terminus, the 1274-residue chain is Myosin-1 (1274 aa).

The disordered stretch occupies residues 1–28 (MAPSKKAGKKGAVGGFLSGASKPQKVQK). Residues 41 to 721 (AGVPDMTLLS…TLFYLEGERD (681 aa)) enclose the Myosin motor domain. 134–141 (GESGAGKT) is a binding site for ATP. A Phosphoserine modification is found at S363. The segment at 410–492 (VIGVLDIYGF…AGIFATLNDA (83 aa)) is actin-binding. IQ domains lie at 725–745 (HTMA…KHEA) and 746–771 (ATKI…YGHQ). The TH1 domain occupies 779 to 969 (RRRFSLLGMR…TIQVGSGEPP (191 aa)). 3 disordered regions span residues 951 to 1029 (RGDA…PVVT), 1042 to 1071 (ARAP…PKEF), and 1116 to 1248 (PSNY…QVAQ). Residues 957 to 974 (KSHTIQVGSGEPPNSLSN) are compositionally biased toward polar residues. The segment covering 1042 to 1053 (ARAPPSIPGRAA) has biased composition (low complexity). Composition is skewed to pro residues over residues 1054–1067 (APPP…PAGP) and 1126–1138 (APPP…PPSR). An SH3 domain is found at 1067-1125 (PPKEFYKALYNFTGQEGEMNLVKGEEVEVKEKDDNGWWMVVKNGQEGWAPSNYLKKVEQ). 2 stretches are compositionally biased toward low complexity: residues 1139–1157 (PVAA…PAVT) and 1170–1226 (AASA…IGGK).

It belongs to the TRAFAC class myosin-kinesin ATPase superfamily. Myosin family. In terms of processing, phosphorylation of the TEDS site (Ser-363) is required for the polarization of the actin cytoskeleton. Phosphorylation probably activates the myosin-I ATPase activity.

It is found in the cytoplasm. The protein localises to the cytoskeleton. It localises to the actin patch. Its function is as follows. Type-I myosin implicated in the organization of the actin cytoskeleton. Required for proper actin cytoskeleton polarization. At the cell cortex, assembles in patch-like structures together with proteins from the actin-polymerizing machinery and promotes actin assembly. Functions as actin nucleation-promoting factor (NPF) for the Arp2/3 complex. This Cryptococcus neoformans var. neoformans serotype D (strain B-3501A) (Filobasidiella neoformans) protein is Myosin-1 (MYO1).